A 218-amino-acid polypeptide reads, in one-letter code: MANSSSVYDWFQERLEIQDITDDVTSKYVPPHVNIFYCLGGITLVCFLIQFATGFAMTFYYKPTVTQAYSSVSYLMTDVSFGWLIRSVHRWSASMMVLMLILHVFRVYLTGGFKRPRELTWVTGVVMAVITVAFGVTGYSLPWDQVGYWAVKIVSGVPAAIPVIGDFMVELLRGGESVGQSTLTRFYSLHTFVLPWSLAVFMLMHFLMIRKQGISGPL.

A helical membrane pass occupies residues 35–55; sequence IFYCLGGITLVCFLIQFATGF. Cysteine 38 is a heme c binding site. 2 residues coordinate heme b: histidine 89 and histidine 103. 3 consecutive transmembrane segments (helical) span residues 93-113, 119-139, and 189-209; these read ASMM…TGGF, LTWV…VTGY, and LHTF…FLMI. Heme b contacts are provided by histidine 190 and histidine 205.

This sequence belongs to the cytochrome b family. PetB subfamily. The 4 large subunits of the cytochrome b6-f complex are cytochrome b6, subunit IV (17 kDa polypeptide, PetD), cytochrome f and the Rieske protein, while the 4 small subunits are PetG, PetL, PetM and PetN. The complex functions as a dimer. It depends on heme b as a cofactor. Requires heme c as cofactor.

It localises to the cellular thylakoid membrane. In terms of biological role, component of the cytochrome b6-f complex, which mediates electron transfer between photosystem II (PSII) and photosystem I (PSI), cyclic electron flow around PSI, and state transitions. The protein is Cytochrome b6 of Prochlorococcus marinus (strain MIT 9301).